The chain runs to 367 residues: 2-aminoethylphosphonate--pyruvate transaminase (367 aa).

N6-(pyridoxal phosphate)lysine is present on Lys194.

Belongs to the class-V pyridoxal-phosphate-dependent aminotransferase family. PhnW subfamily. Homodimer. It depends on pyridoxal 5'-phosphate as a cofactor.

The enzyme catalyses (2-aminoethyl)phosphonate + pyruvate = phosphonoacetaldehyde + L-alanine. Involved in phosphonate degradation. This Salmonella paratyphi B (strain ATCC BAA-1250 / SPB7) protein is 2-aminoethylphosphonate--pyruvate transaminase.